Here is a 104-residue protein sequence, read N- to C-terminus: Large ribosomal subunit protein uL24 (104 aa).

This sequence belongs to the universal ribosomal protein uL24 family. In terms of assembly, part of the 50S ribosomal subunit.

One of two assembly initiator proteins, it binds directly to the 5'-end of the 23S rRNA, where it nucleates assembly of the 50S subunit. Functionally, one of the proteins that surrounds the polypeptide exit tunnel on the outside of the subunit. In Corynebacterium diphtheriae (strain ATCC 700971 / NCTC 13129 / Biotype gravis), this protein is Large ribosomal subunit protein uL24.